The following is a 1298-amino-acid chain: Phosphoribosylformylglycinamidine synthase (1298 aa).

A disordered region spans residues 303-327 (FPGAATGSGGEIRDEGATGRGAKPK). ATP is bound by residues 305-316 (GAATGSGGEIRD), 384-386 (TGY), and Ala676. Residues Asp677, Glu716, Asn720, and Asp884 each contribute to the Mg(2+) site. Ser886 provides a ligand contact to ATP. The region spanning 1045 to 1298 (VAVLREQGVN…MFRNARAWVN (254 aa)) is the Glutamine amidotransferase type-1 domain. Residue Cys1138 is the Nucleophile of the active site. Catalysis depends on residues His1263 and Glu1265.

The protein in the N-terminal section; belongs to the FGAMS family. As to quaternary structure, monomer.

The protein localises to the cytoplasm. It catalyses the reaction N(2)-formyl-N(1)-(5-phospho-beta-D-ribosyl)glycinamide + L-glutamine + ATP + H2O = 2-formamido-N(1)-(5-O-phospho-beta-D-ribosyl)acetamidine + L-glutamate + ADP + phosphate + H(+). Its pathway is purine metabolism; IMP biosynthesis via de novo pathway; 5-amino-1-(5-phospho-D-ribosyl)imidazole from N(2)-formyl-N(1)-(5-phospho-D-ribosyl)glycinamide: step 1/2. Its function is as follows. Phosphoribosylformylglycinamidine synthase involved in the purines biosynthetic pathway. Catalyzes the ATP-dependent conversion of formylglycinamide ribonucleotide (FGAR) and glutamine to yield formylglycinamidine ribonucleotide (FGAM) and glutamate. The polypeptide is Phosphoribosylformylglycinamidine synthase (Pseudomonas savastanoi pv. phaseolicola (strain 1448A / Race 6) (Pseudomonas syringae pv. phaseolicola (strain 1448A / Race 6))).